A 445-amino-acid chain; its full sequence is GTPase Der (445 aa).

EngA-type G domains lie at 3 to 167 and 180 to 353; these read PVIA…YAGQ and IKIA…AAAM. GTP is bound by residues 9–16, 56–60, 119–122, 186–193, 233–237, and 298–301; these read GRPNVGKS, DTGGF, NKAE, DTAGL, and NKWD. The 85-residue stretch at 354 to 438 folds into the KH-like domain; sequence AKLPTPKLTR…PLRIEFRSSN (85 aa).

It belongs to the TRAFAC class TrmE-Era-EngA-EngB-Septin-like GTPase superfamily. EngA (Der) GTPase family. As to quaternary structure, associates with the 50S ribosomal subunit.

GTPase that plays an essential role in the late steps of ribosome biogenesis. The polypeptide is GTPase Der (Burkholderia ambifaria (strain ATCC BAA-244 / DSM 16087 / CCUG 44356 / LMG 19182 / AMMD) (Burkholderia cepacia (strain AMMD))).